The chain runs to 432 residues: Putative D-alanyl-D-alanine carboxypeptidase (432 aa).

A helical; Signal-anchor transmembrane segment spans residues 7 to 25 (ATVLLTFSLSAFAVEYPVL).

The protein belongs to the peptidase S12 family. YfeW subfamily.

It is found in the cell inner membrane. It catalyses the reaction Preferential cleavage: (Ac)2-L-Lys-D-Ala-|-D-Ala. Also transpeptidation of peptidyl-alanyl moieties that are N-acyl substituents of D-alanine.. The protein is Putative D-alanyl-D-alanine carboxypeptidase of Salmonella gallinarum (strain 287/91 / NCTC 13346).